A 500-amino-acid polypeptide reads, in one-letter code: Cytochrome P450 2D26 (500 aa).

Ser249 carries the phosphoserine modification. Position 446 (Cys446) interacts with heme.

The protein belongs to the cytochrome P450 family. Heme is required as a cofactor.

The protein localises to the endoplasmic reticulum membrane. It is found in the microsome membrane. The catalysed reaction is an organic molecule + reduced [NADPH--hemoprotein reductase] + O2 = an alcohol + oxidized [NADPH--hemoprotein reductase] + H2O + H(+). In terms of biological role, cytochromes P450 are a group of heme-thiolate monooxygenases. In liver microsomes, this enzyme is involved in an NADPH-dependent electron transport pathway. It oxidizes a variety of structurally unrelated compounds, including steroids, fatty acids, and xenobiotics. The polypeptide is Cytochrome P450 2D26 (Mus musculus (Mouse)).